The primary structure comprises 860 residues: Leucine--tRNA ligase (860 aa).

The short motif at 42-52 is the 'HIGH' region element; it reads PYPSGRLHMGH. Positions 619–623 match the 'KMSKS' region motif; that stretch reads KMSKS. Lysine 622 serves as a coordination point for ATP.

It belongs to the class-I aminoacyl-tRNA synthetase family.

The protein localises to the cytoplasm. It carries out the reaction tRNA(Leu) + L-leucine + ATP = L-leucyl-tRNA(Leu) + AMP + diphosphate. The sequence is that of Leucine--tRNA ligase from Yersinia enterocolitica serotype O:8 / biotype 1B (strain NCTC 13174 / 8081).